The sequence spans 354 residues: Protein sex-lethal (354 aa).

Residues 1-21 (MYGNNNPGSNNNNGGYPPYGY) form a disordered region. 2 consecutive RRM domains span residues 125-203 (TNLI…YARP) and 211-291 (TNLY…LAEE).

In terms of assembly, part of a complex containing fl(2)d, Sxl and vir. Part of a complex composed of at least mei-P26, bam, bgcn and Sxl; this complex is involved in translational repression of nanos mRNA. interacts with mei-p26. Interacts with nito. Interacts with Unr; cooperates with Unr to prevent translation of msl-2 transcripts. Interacts with how; promoting nuclear retention of msl-2 transcripts. In terms of tissue distribution, expressed in somatic tissues, but not in the pole cells, which are the precursors of the germline. Expressed in the anterior of the germarium.

The protein resides in the nucleus. Its subcellular location is the cytoplasm. In terms of biological role, sex determination switch protein, which controls sexual development and dosage compensation in females. Sxl protein is only active in females: it is inactive in males throughout development. Acts as a mRNA-binding protein, which specifically binds to a subset of pre-mRNAs and mRNAs and regulates their processing and/or translation. Binds nanos mRNA and is involved in bam-bgcn mediated repression of nanos mRNA translation. Promotes sexual development by controlling the female-specific alternative splicing of the transformer (tra) pre-mRNA: binds tightly to a characteristic uridine-rich polypyrimidine tract at the non-sex specific 3' splice site in one of the tra introns, preventing the general splicing factor U2AF from binding to this site and forcing it to bind to the female-specific 3' splice site. Acts as an inhibitor of dosage compensation in females by preventing production of msl-2 protein, an essential component of the MSL complex, the complex that mediates X-chromosome dosage compensation. Specifically binds to uridine stretches in both the 5'- and 3'-UTR of msl-2 transcripts. Sxl first acts at the splicing level by promoting retention of an intron in the 5' UTR of msl-2 pre-mRNA. The retained intron contains Sxl-binding sites that are required for subsequent steps of repression: after msl-2 mRNA export into the cytoplasm, Sxl coordinates its translational repression by targeting early steps of translation initiation. Together with how, Sxl also prevents production of msl-2 protein by preventing nuclear export of msl-2 transcripts. Embryo-specific product, which is expressed early only in female embryos and specifies female-adult specific splicing. The protein is Protein sex-lethal of Drosophila melanogaster (Fruit fly).